A 438-amino-acid polypeptide reads, in one-letter code: Protein kinase PINOID (438 aa).

A disordered region spans residues 1 to 24 (MLRESDGEMSLGTTNSPISSGTES). Positions 11 to 24 (LGTTNSPISSGTES) are enriched in polar residues. The 320-residue stretch at 75–394 (FRLMRRIGAG…AAEVKVHPFF (320 aa)) folds into the Protein kinase domain. ATP is bound by residues 81–89 (IGAGDIGTV) and K109. The active-site Proton acceptor is D205. The region spanning 395–438 (KGLNFALIRTLTPPEIPSSVVKKPMKSATFSGRSSNKPAAFDYF) is the AGC-kinase C-terminal domain.

It belongs to the protein kinase superfamily. Ser/Thr protein kinase family. In terms of assembly, interacts with PDK1, CML12 and PBP1. Component of a complex made of PINs (e.g. PIN1 and PIN2), MAB4/MELs (e.g. NPY1/MAB4 and NPY5/MEL1) and AGC kinases (e.g. D6PK and PID) at the plasma membrane. Binds directly to PIN2, NPY1/MAB4 and NPY5/MEL1. In terms of processing, autophosphorylated. Phosphorylated by PDK1. Expressed in root hair cells, shoot xylem parenchyma cells and endodermis around the vasculature. Expressed in anther primordia, vasculature of the growing flower stalk, young pedicels and bracts and developing sepals, but not in petals. In pistils, transiently expressed in the vasculature of the style and the septum, and in the integuments and funiculus of the developing ovule.

It is found in the cytoplasm. The protein localises to the cytosol. Its subcellular location is the cell membrane. The catalysed reaction is L-seryl-[protein] + ATP = O-phospho-L-seryl-[protein] + ADP + H(+). It carries out the reaction L-threonyl-[protein] + ATP = O-phospho-L-threonyl-[protein] + ADP + H(+). Activated by magnesium and PDK1. Inhibited by staurosporine. Repressed by calcium. Serine/threonine-protein kinase involved in the regulation of auxin signaling. Acts as a positive regulator of cellular auxin efflux and regulates organ development by enhancing polar auxin transport. Phosphorylates conserved serine residues in the PIN auxin efflux carriers. Phosphorylation of PIN proteins is required and sufficient for apical-basal PIN polarity that enables directional intercellular auxin fluxes, which mediate differential growth, tissue patterning and organogenesis. Phosphorylates PIN proteins (e.g. PIN1 and PIN2), especially when NPY proteins (e.g. NPY1/MAB4 and NPY5/MEL1) are recruited at the plasma membrane; this enhances the polarized localizations (apical or basal) of PINs in the cell by limiting their lateral diffusion-based escape. Acts in association with PIN1 to control the establishment of bilateral symmetry and promotion of cotyledon outgrowth. Regulates root gravitropism through modulation of PIN2-dependent basipetal auxin transport. Required for polarization of PIN3-dependent auxin transport for hypocotyl gravitropic response. The protein kinase activity of PID is essential for its auxin efflux regulatory function. PID kinase and PP2A phosphatase activities antagonistically regulate phosphorylation of PIN proteins, affecting PIN sorting. The polypeptide is Protein kinase PINOID (Arabidopsis thaliana (Mouse-ear cress)).